The following is a 52-amino-acid chain: uncharacterized protein (52 aa).

The interval 1–52 (MSLRPCLTPSSMQYSDIYIPTPTPTHHTHTPTPHPHPHTHTHTHHNPNPTLF) is disordered. The span at 35 to 45 (PHPHTHTHTHH) shows a compositional bias: basic residues.

This is an uncharacterized protein from Saccharomyces cerevisiae (strain ATCC 204508 / S288c) (Baker's yeast).